The sequence spans 177 residues: Large ribosomal subunit protein uL6 (177 aa).

Belongs to the universal ribosomal protein uL6 family. Part of the 50S ribosomal subunit.

In terms of biological role, this protein binds to the 23S rRNA, and is important in its secondary structure. It is located near the subunit interface in the base of the L7/L12 stalk, and near the tRNA binding site of the peptidyltransferase center. This is Large ribosomal subunit protein uL6 from Pseudomonas fluorescens (strain ATCC BAA-477 / NRRL B-23932 / Pf-5).